The following is a 471-amino-acid chain: Tigger transposable element-derived protein 3 (471 aa).

One can recognise an HTH psq-type domain in the interval 3–55 (LSSKKKLHALSLAEKIQVLELLDESKMSQSEVARRFQVSQPQISRICKNKEKL). DNA-binding regions (H-T-H motif) lie at residues 31 to 51 (QSEVARRFQVSQPQISRICKN) and 100 to 130 (PMLLHKAKELADIMGQDFVPSIGWLVRWKRR). The HTH CENPB-type domain maps to 67 to 137 (ERKRKRESKY…KRRNNVGFGA (71 aa)). One can recognise a DDE-1 domain in the interval 167 to 360 (FSPEDVFGCA…VPPQLIFSSF (194 aa)).

The protein belongs to the tigger transposable element derived protein family.

The protein localises to the nucleus. The chain is Tigger transposable element-derived protein 3 (TIGD3) from Homo sapiens (Human).